The primary structure comprises 287 residues: Small ribosomal subunit protein uS2 (287 aa).

The span at 254 to 277 (LASATASATPSATASTTALTDAPA) shows a compositional bias: low complexity. The tract at residues 254–287 (LASATASATPSATASTTALTDAPAGATEPTTDAS) is disordered.

Belongs to the universal ribosomal protein uS2 family.

This Mycobacterium tuberculosis (strain CDC 1551 / Oshkosh) protein is Small ribosomal subunit protein uS2 (rpsB).